A 333-amino-acid polypeptide reads, in one-letter code: DNA-directed RNA polymerase subunit alpha (333 aa).

The segment at methionine 1–asparagine 227 is alpha N-terminal domain (alpha-NTD). The interval glutamate 247 to alanine 333 is alpha C-terminal domain (alpha-CTD).

Belongs to the RNA polymerase alpha chain family. Homodimer. The RNAP catalytic core consists of 2 alpha, 1 beta, 1 beta' and 1 omega subunit. When a sigma factor is associated with the core the holoenzyme is formed, which can initiate transcription.

It carries out the reaction RNA(n) + a ribonucleoside 5'-triphosphate = RNA(n+1) + diphosphate. DNA-dependent RNA polymerase catalyzes the transcription of DNA into RNA using the four ribonucleoside triphosphates as substrates. The chain is DNA-directed RNA polymerase subunit alpha from Sulfurovum sp. (strain NBC37-1).